A 419-amino-acid polypeptide reads, in one-letter code: L-rhamnose isomerase (419 aa).

The Mn(2+) site is built by His262, Asp294, and Asp296.

This sequence belongs to the rhamnose isomerase family. As to quaternary structure, homotetramer. It depends on Mn(2+) as a cofactor.

The protein resides in the cytoplasm. The catalysed reaction is L-rhamnopyranose = L-rhamnulose. The protein operates within carbohydrate degradation; L-rhamnose degradation; glycerone phosphate from L-rhamnose: step 1/3. Catalyzes the interconversion of L-rhamnose and L-rhamnulose. This is L-rhamnose isomerase from Salmonella gallinarum (strain 287/91 / NCTC 13346).